The chain runs to 420 residues: Tol-Pal system protein TolB (420 aa).

The signal sequence occupies residues 1–21 (MKLFVHLVLFISLFIPYFTKA).

It belongs to the TolB family. As to quaternary structure, the Tol-Pal system is composed of five core proteins: the inner membrane proteins TolA, TolQ and TolR, the periplasmic protein TolB and the outer membrane protein Pal. They form a network linking the inner and outer membranes and the peptidoglycan layer.

It is found in the periplasm. In terms of biological role, part of the Tol-Pal system, which plays a role in outer membrane invagination during cell division and is important for maintaining outer membrane integrity. The sequence is that of Tol-Pal system protein TolB from Wolbachia pipientis wMel.